We begin with the raw amino-acid sequence, 156 residues long: ATP synthase subunit b 1 (156 aa).

The helical transmembrane segment at 5-27 (FTLISQAMAFAIFIWFTVRFVWP) threads the bilayer.

Belongs to the ATPase B chain family. In terms of assembly, F-type ATPases have 2 components, F(1) - the catalytic core - and F(0) - the membrane proton channel. F(1) has five subunits: alpha(3), beta(3), gamma(1), delta(1), epsilon(1). F(0) has three main subunits: a(1), b(2) and c(10-14). The alpha and beta chains form an alternating ring which encloses part of the gamma chain. F(1) is attached to F(0) by a central stalk formed by the gamma and epsilon chains, while a peripheral stalk is formed by the delta and b chains.

Its subcellular location is the cell inner membrane. Functionally, f(1)F(0) ATP synthase produces ATP from ADP in the presence of a proton or sodium gradient. F-type ATPases consist of two structural domains, F(1) containing the extramembraneous catalytic core and F(0) containing the membrane proton channel, linked together by a central stalk and a peripheral stalk. During catalysis, ATP synthesis in the catalytic domain of F(1) is coupled via a rotary mechanism of the central stalk subunits to proton translocation. Its function is as follows. Component of the F(0) channel, it forms part of the peripheral stalk, linking F(1) to F(0). The protein is ATP synthase subunit b 1 of Nitrosospira multiformis (strain ATCC 25196 / NCIMB 11849 / C 71).